Here is a 93-residue protein sequence, read N- to C-terminus: Integration host factor subunit beta (93 aa).

The interval 59–93 (RVGRNPKTGQSVSLDGKFVPHFKPGKELRDRVNDD) is disordered. Over residues 82-93 (PGKELRDRVNDD) the composition is skewed to basic and acidic residues.

Belongs to the bacterial histone-like protein family. Heterodimer of an alpha and a beta chain.

Its function is as follows. This protein is one of the two subunits of integration host factor, a specific DNA-binding protein that functions in genetic recombination as well as in transcriptional and translational control. In Stutzerimonas stutzeri (strain A1501) (Pseudomonas stutzeri), this protein is Integration host factor subunit beta.